We begin with the raw amino-acid sequence, 226 residues long: MKHGKNYKNALAKYDSAASYELPKAVDIVKELKYAKFDETVEVHVSLTLGKGQSVRDTLVLPHQFRGEKKVLVFCTDDRVKEALDAGAAYAGSTEYIEKVKGGWLDFDIAVATPDMMKDVGRLGMVLGRRGLMPNPKTGTVTTDIASAINELKKGRVEFRADKGGVVHLPVGKVSMDSSKIVENVQALINETMRKKPADAKGDYIRSVSISSTMGPGVWVDYKVGE.

The protein belongs to the universal ribosomal protein uL1 family. In terms of assembly, part of the 50S ribosomal subunit.

Its function is as follows. Binds directly to 23S rRNA. The L1 stalk is quite mobile in the ribosome, and is involved in E site tRNA release. In terms of biological role, protein L1 is also a translational repressor protein, it controls the translation of the L11 operon by binding to its mRNA. The sequence is that of Large ribosomal subunit protein uL1 from Treponema denticola (strain ATCC 35405 / DSM 14222 / CIP 103919 / JCM 8153 / KCTC 15104).